The following is an 858-amino-acid chain: Autoinducer 2 sensor kinase/phosphatase LuxQ (858 aa).

Helical transmembrane passes span 14-34 (STLI…GIFV) and 362-382 (LFNF…LIQI). The region spanning 488–710 (KMSHEIRTPI…TFVVTLPVKD (223 aa)) is the Histidine kinase domain. At His491 the chain carries Phosphohistidine; by autocatalysis. One can recognise a Response regulatory domain in the interval 735-850 (KVLLVEDNHT…ALHEAFVDFK (116 aa)). A 4-aspartylphosphate modification is found at Asp784.

As to quaternary structure, binds the complex formed by the autoinducer and LuxP.

It is found in the cell inner membrane. It catalyses the reaction ATP + protein L-histidine = ADP + protein N-phospho-L-histidine.. Its function is as follows. At low cell density, in absence of autoinducer has a kinase activity, and autophosphorylates on a histidine residue. The phosphoryl group is then transferred to an aspartate residue in the response regulator domain. The phosphoryl group is transferred to LuxU, and ultimately to LuxO. At high cell density, in the presence of autoinducer, the kinase activity is inactivated, and the response regulator domain has a phosphatase activity. The protein is Autoinducer 2 sensor kinase/phosphatase LuxQ (luxQ) of Vibrio parahaemolyticus serotype O3:K6 (strain RIMD 2210633).